Reading from the N-terminus, the 86-residue chain is Large ribosomal subunit protein eL20 (86 aa).

Belongs to the eukaryotic ribosomal protein eL20 family. As to quaternary structure, part of the 50S ribosomal subunit. Binds 23S rRNA.

The polypeptide is Large ribosomal subunit protein eL20 (Metallosphaera sedula (strain ATCC 51363 / DSM 5348 / JCM 9185 / NBRC 15509 / TH2)).